The primary structure comprises 315 residues: Probable cell division protein WhiA (315 aa).

A DNA-binding region (H-T-H motif) is located at residues 280 to 313 (SLKELGDLLDPPLSKSGVAYRMRKLEESVKEILQ).

The protein belongs to the WhiA family.

In terms of biological role, involved in cell division and chromosome segregation. This chain is Probable cell division protein WhiA, found in Syntrophomonas wolfei subsp. wolfei (strain DSM 2245B / Goettingen).